The following is a 185-amino-acid chain: NEDD8-conjugating enzyme UBE2F (185 aa).

Met1 is subject to N-acetylmethionine. The tract at residues 1–29 (MLTLASKLKRDDGLKGSRASATASDSTRR) is interaction with UBA3. Positions 32–185 (VRDRLLVKEV…VEDYIKRYAR (154 aa)) constitute a UBC core domain. Catalysis depends on Cys116, which acts as the Glycyl thioester intermediate.

It belongs to the ubiquitin-conjugating enzyme family. UBE2F subfamily. As to quaternary structure, interacts with UBA3 and RBX2. Interacts (N-terminally acetylated form) with (via DCUN1 domain) DCUN1D1, DCUN1D2, DCUN1D3, DCUN1D4 and DCUN1D5. Post-translationally, the acetylation of Met-1 increases affinity for DCUN1D3 by about 2 orders of magnitude and is crucial for NEDD8 transfer to cullins.

The enzyme catalyses [E1 NEDD8-activating enzyme]-S-[NEDD8 protein]-yl-L-cysteine + [E2 NEDD8-conjugating enzyme]-L-cysteine = [E1 NEDD8-activating enzyme]-L-cysteine + [E2 NEDD8-conjugating enzyme]-S-[NEDD8-protein]-yl-L-cysteine.. Its pathway is protein modification; protein neddylation. In terms of biological role, accepts the ubiquitin-like protein NEDD8 from the UBA3-NAE1 E1 complex and catalyzes its covalent attachment to other proteins. Together with the E3 ubiquitin ligase RNF7/RBX2, specifically neddylates cullin-5 (CUL5). Does not neddylate CUL1, CUL2, CUL3, CUL4A or CUL4B. Mediates neddylation of the CUL9-RBX1 complex. This is NEDD8-conjugating enzyme UBE2F (UBE2F) from Bos taurus (Bovine).